The chain runs to 95 residues: MSRISKEQVKHVAHLARLAITEEEAETFRNQLEDIITAAEQLNEVDTEGVVPTTHVLQMHNVLREDKPEKGLEVKEVLKNAPDHEDGQIRVPSVF.

This sequence belongs to the GatC family. As to quaternary structure, heterotrimer of A, B and C subunits.

The catalysed reaction is L-glutamyl-tRNA(Gln) + L-glutamine + ATP + H2O = L-glutaminyl-tRNA(Gln) + L-glutamate + ADP + phosphate + H(+). The enzyme catalyses L-aspartyl-tRNA(Asn) + L-glutamine + ATP + H2O = L-asparaginyl-tRNA(Asn) + L-glutamate + ADP + phosphate + 2 H(+). Its function is as follows. Allows the formation of correctly charged Asn-tRNA(Asn) or Gln-tRNA(Gln) through the transamidation of misacylated Asp-tRNA(Asn) or Glu-tRNA(Gln) in organisms which lack either or both of asparaginyl-tRNA or glutaminyl-tRNA synthetases. The reaction takes place in the presence of glutamine and ATP through an activated phospho-Asp-tRNA(Asn) or phospho-Glu-tRNA(Gln). This is Aspartyl/glutamyl-tRNA(Asn/Gln) amidotransferase subunit C from Shouchella clausii (strain KSM-K16) (Alkalihalobacillus clausii).